The primary structure comprises 429 residues: Gamma-glutamyl phosphate reductase (429 aa).

This sequence belongs to the gamma-glutamyl phosphate reductase family.

The protein localises to the cytoplasm. The enzyme catalyses L-glutamate 5-semialdehyde + phosphate + NADP(+) = L-glutamyl 5-phosphate + NADPH + H(+). It functions in the pathway amino-acid biosynthesis; L-proline biosynthesis; L-glutamate 5-semialdehyde from L-glutamate: step 2/2. In terms of biological role, catalyzes the NADPH-dependent reduction of L-glutamate 5-phosphate into L-glutamate 5-semialdehyde and phosphate. The product spontaneously undergoes cyclization to form 1-pyrroline-5-carboxylate. The sequence is that of Gamma-glutamyl phosphate reductase from Methylocella silvestris (strain DSM 15510 / CIP 108128 / LMG 27833 / NCIMB 13906 / BL2).